Consider the following 291-residue polypeptide: ATP phosphoribosyltransferase (291 aa).

This sequence belongs to the ATP phosphoribosyltransferase family. Long subfamily. The cofactor is Mg(2+).

The protein resides in the cytoplasm. It carries out the reaction 1-(5-phospho-beta-D-ribosyl)-ATP + diphosphate = 5-phospho-alpha-D-ribose 1-diphosphate + ATP. Its pathway is amino-acid biosynthesis; L-histidine biosynthesis; L-histidine from 5-phospho-alpha-D-ribose 1-diphosphate: step 1/9. With respect to regulation, feedback inhibited by histidine. Catalyzes the condensation of ATP and 5-phosphoribose 1-diphosphate to form N'-(5'-phosphoribosyl)-ATP (PR-ATP). Has a crucial role in the pathway because the rate of histidine biosynthesis seems to be controlled primarily by regulation of HisG enzymatic activity. The protein is ATP phosphoribosyltransferase of Geotalea uraniireducens (strain Rf4) (Geobacter uraniireducens).